Reading from the N-terminus, the 171-residue chain is Adenine phosphoribosyltransferase (171 aa).

This sequence belongs to the purine/pyrimidine phosphoribosyltransferase family. In terms of assembly, homodimer.

Its subcellular location is the cytoplasm. It carries out the reaction AMP + diphosphate = 5-phospho-alpha-D-ribose 1-diphosphate + adenine. It participates in purine metabolism; AMP biosynthesis via salvage pathway; AMP from adenine: step 1/1. Catalyzes a salvage reaction resulting in the formation of AMP, that is energically less costly than de novo synthesis. The protein is Adenine phosphoribosyltransferase of Rhodospirillum rubrum (strain ATCC 11170 / ATH 1.1.1 / DSM 467 / LMG 4362 / NCIMB 8255 / S1).